We begin with the raw amino-acid sequence, 800 residues long: Cell division cycle 5-like protein (800 aa).

HTH myb-type domains follow at residues 1-56 (MRNV…DPSI) and 57-106 (KKTE…DEVQ). DNA-binding regions (H-T-H motif) lie at residues 29–52 (WARI…HEWL) and 80–102 (WKTI…NRLL). Disordered regions lie at residues 109 to 186 (QDNE…KRKF), 334 to 378 (YEKL…NIRT), 399 to 445 (QTPL…KQSL), and 571 to 610 (NKTF…NDND). Gly residues predominate over residues 113 to 122 (NGGGSGGGGT). A compositionally biased stretch (basic and acidic residues) spans 133-142 (NDPRRLRMGD). Residues 340 to 351 (SGSGGGSGGVGV) show a composition bias toward gly residues. Residues 361–376 (TASISSTAANNNTNNI) show a composition bias toward low complexity. 2 stretches are compositionally biased toward polar residues: residues 409–445 (NVSQ…KQSL) and 573–584 (TFPNDSITPSST). A compositionally biased stretch (basic and acidic residues) spans 592–601 (DNHHHHHDDI). Coiled-coil stretches lie at residues 621–700 (NTEL…KIKN) and 748–800 (VALK…LSIF).

The protein belongs to the CEF1 family. In terms of assembly, component of the precatalytic, catalytic and postcatalytic spliceosome complexes.

It is found in the nucleus. The protein resides in the cytoplasm. DNA-binding protein involved in cell cycle control. May act as a transcription activator. Plays a role in pre-mRNA splicing as core component of precatalytic, catalytic and postcatalytic spliceosomal complexes. May also play a role in the response to DNA damage (DDR). This chain is Cell division cycle 5-like protein (cdc5l), found in Dictyostelium discoideum (Social amoeba).